Consider the following 85-residue polypeptide: Large ribosomal subunit protein bL27 (85 aa).

The tract at residues 1-20 (MAHKKAGGSTRNGRDSESKR) is disordered.

It belongs to the bacterial ribosomal protein bL27 family.

The chain is Large ribosomal subunit protein bL27 from Yersinia pseudotuberculosis serotype O:1b (strain IP 31758).